Reading from the N-terminus, the 352-residue chain is C-C chemokine receptor type 5 (352 aa).

The Extracellular segment spans residues 1 to 30 (MDYQVSSPTYDIDYYTSEPCQKVNVKQIAA). Tyr3 bears the Sulfotyrosine mark. Residues Ser6 and Ser7 are each glycosylated (O-linked (GalNAc...) serine). Residues Tyr10, Tyr14, and Tyr15 each carry the sulfotyrosine modification. 2 cysteine pairs are disulfide-bonded: Cys20–Cys269 and Cys101–Cys178. Residues 31-58 (RLLPPLYSLVFIFGFVGNILVVLILINC) traverse the membrane as a helical segment. Residues 59–68 (KRLKSMTDIY) are Cytoplasmic-facing. Residues 69 to 89 (LLNLAISDLFFLLTVPFWAHY) form a helical membrane-spanning segment. The Extracellular segment spans residues 90-102 (AAAQWDFGNTMCQ). Residues 103–124 (LLTGLYFIGFFSGIFFIILLTI) traverse the membrane as a helical segment. The Cytoplasmic portion of the chain corresponds to 125 to 141 (DRYLAIVHAVFALKART). A helical transmembrane segment spans residues 142–166 (VTFGVVTSVITWVVAVFASLPGIIF). The Extracellular portion of the chain corresponds to 167 to 198 (TRSQREGLHYTCSSHFPYSQYQFWKNFQTLKI). The chain crosses the membrane as a helical span at residues 199–218 (VILGLVLPLLVMVICYSGIL). Residues 219–235 (KTLLRCRNEKKRHRAVR) are Cytoplasmic-facing. The helical transmembrane segment at 236–260 (LIFTIMIVYFLFWAPYNIVLLLNTF) threads the bilayer. Over 261–277 (QEFFGLNNCSSSNRLDQ) the chain is Extracellular. Residues 278-301 (AMQVTETLGMTHCCINPIIYAFVG) form a helical membrane-spanning segment. The Cytoplasmic portion of the chain corresponds to 302-352 (EKFRNYLLVFFQKHIAKRFCKCCRIFQQEAPERASSVYTRSTGEQEISVGL). S-palmitoyl cysteine attachment occurs at residues Cys321, Cys323, and Cys324. A phosphoserine; by BARK1 mark is found at Ser336, Ser337, Ser342, and Ser349.

The protein belongs to the G-protein coupled receptor 1 family. In terms of assembly, interacts with PRAF2. Efficient ligand binding to CCL3/MIP-1alpha and CCL4/MIP-1beta requires sulfation, O-glycosylation and sialic acid modifications. Glycosylation on Ser-6 is required for efficient binding of CCL4. Interacts with GRK2. Interacts with ARRB1 and ARRB2. Interacts with CNIH4. Interacts with S100A4; this interaction stimulates T-lymphocyte chemotaxis. In terms of processing, sulfated on at least 2 of the N-terminal tyrosines. Sulfation is required for efficient binding of the chemokines, CCL3 and CCL4. Post-translationally, palmitoylation in the C-terminal is important for cell surface expression. Phosphorylation on serine residues in the C-terminal is stimulated by binding CC chemokines especially by APO-RANTES. In terms of processing, O-glycosylated, but not N-glycosylated. Ser-6 appears to be the major site even if Ser-7 may be also O-glycosylated. Also sialylated glycans present which contribute to chemokine binding. Thr-16 and Ser-17 may also be glycosylated and, if so, with small moieties such as a T-antigen.

Its subcellular location is the cell membrane. Its function is as follows. Receptor for a number of inflammatory CC-chemokines including CCL3/MIP-1-alpha, CCL4/MIP-1-beta and RANTES and subsequently transduces a signal by increasing the intracellular calcium ion level. May play a role in the control of granulocytic lineage proliferation or differentiation. Participates in T-lymphocyte migration to the infection site by acting as a chemotactic receptor. This Colobus polykomos (Western black-and-white colobus monkey) protein is C-C chemokine receptor type 5 (CCR5).